We begin with the raw amino-acid sequence, 1484 residues long: MIFSQGASPLKGDFSRIKFSIASPESILAHSRGEVLKPETINYRTFKPERDGLMCEKIFGPTKDWECYCGKYKRVRYKGIICDRCGVEVTTKSVRRERMGHIALAVPVVHTWFFRSVPSKIGALLDLSTKELERIIYYEVYVVINPGEPGEKQGIKKLDRLTEEQYFQIITEFEDNQDLDDSDPAKFVAKMGGEAIHLLLRNLDLDASAVHLRTILKESSSEQKRADALKRLKVVEAFRKSYEPHRKVRKKSTGLFPEDEMPEPYIYEGNKPEYMVMEAIPVIPPELRPLVPLEGGRFATSDLNDLYRRVIIRNNRLKKLIDIRAPEVILRNEKRMLQEAVDALFDNSRKANAVKTGESNRPLKSLSDSLKGKQGRFRQNLLGKRVDYSGRSVIVVGPELKLHQCGLPKSMAIELFQPFVIRRLVERGIAKSVKSAKKLIDKKDPVVWDVLEKVIDGRPVLLNRAPTLHRLGIQAFQPTLIEGKAIQLHPLVCTAFNADFDGDQMAVHVPLSQEAQLEASLLMLSSHNLILPQSGKPVTVPSQDMVLGMYYLTKSRSGGVGEGSVFYSREDVLIAHNEERVGLHTQIFIQHTGRIDQKFDPLRVLDLVVEPGTEKHTWLKSQLEQKKLILTTVGRVIFNESVPDEIGFINRVIDKKGAKELIGRLSSEVGNVETARFLDNIKQVGFFYAMKGGLSVSLSDAIVPETKAKHIKGAQRDSTRVVKEYNRGTLTDNERYNQIVDVWQKTSNIVAEESYQILKKDRAGFNPLYMMLDSGARGSREQVRQLTGMRGLIARPQKSMSGQPGEIIENPIISNLKEGLTVLEYFISTHGARKGLSDTSLKTADAGYLTRRLHDVAQDVIVTMEDCGTTRGLLIYRNIEEETSGQIKFREKIRGRVTARDIVDTITGNVIVPAGETITDAHAELIQDTPGVEEAEIRSVLTCEAKQGICSKCYGTNLSVHKPVEIGEAVGVIAAQSIGEPGTQLTLRTFHQGGTAQGGISETETKAVNEGTVQFEDIKTVDHSAINEDGVEEDSVIVIQKNGKINLVDSDSGKVLKRYVVPHGAHLACKAGDLVRKDQVLFSSEPNSTQIIAEINGTIKFADIEKGVTYKEEVDPQTGFAQHTIINWRSKLRATETREPRLMIVDETGEVRKTYPVPIKSNLYVEDGQKVVPGDIMAKVPRNLDRSGGDITAGLPKVTELFEARIPSDPAIVTEIDGYVSFGSQRRSSKEIKVKNDFGEEKVYYVQVGKHVLANEGDEVKAGDPLTDGAVSPQDILRIQGPNAVQQYLVNEIQKVYQINAGVEINDKHLEVIVRQMLQKVRVEEPGDTEMLPGDLIDRSAFLEANESVAEKVRITERGDAPARMQDEELQKLRDITKLNRELRKNGKVMIAYEPALQGTSHPVLLGITSAALQTESVISAASFQETTKVLTDAAVAGKVDHLAGLKENVIVGKLIPAGTGLKKYKTLRLIGEPEAEAPAKEDA.

Residues Cys-67, Cys-69, Cys-82, and Cys-85 each contribute to the Zn(2+) site. The Mg(2+) site is built by Asp-499, Asp-501, and Asp-503. Zn(2+) is bound by residues Cys-867, Cys-943, Cys-950, and Cys-953.

This sequence belongs to the RNA polymerase beta' chain family. The RNAP catalytic core consists of 2 alpha, 1 beta, 1 beta' and 1 omega subunit. When a sigma factor is associated with the core the holoenzyme is formed, which can initiate transcription. Mg(2+) is required as a cofactor. It depends on Zn(2+) as a cofactor.

The catalysed reaction is RNA(n) + a ribonucleoside 5'-triphosphate = RNA(n+1) + diphosphate. DNA-dependent RNA polymerase catalyzes the transcription of DNA into RNA using the four ribonucleoside triphosphates as substrates. The protein is DNA-directed RNA polymerase subunit beta' of Chlorobium phaeovibrioides (strain DSM 265 / 1930) (Prosthecochloris vibrioformis (strain DSM 265)).